The following is a 359-amino-acid chain: Outer membrane protein assembly factor BamC (359 aa).

The first 21 residues, Met-1–Ser-21, serve as a signal peptide directing secretion. Cys-22 carries N-palmitoyl cysteine lipidation. Cys-22 carries the S-diacylglycerol cysteine lipid modification.

Belongs to the BamC family. Part of the Bam complex.

It localises to the cell outer membrane. Part of the outer membrane protein assembly complex, which is involved in assembly and insertion of beta-barrel proteins into the outer membrane. This is Outer membrane protein assembly factor BamC from Kangiella koreensis (strain DSM 16069 / JCM 12317 / KCTC 12182 / SW-125).